Consider the following 477-residue polypeptide: Metallopeptidase AprA (477 aa).

The signal sequence occupies residues 1–20; sequence MSKAKDKAIVSAAQASTAYS. His-183 serves as a coordination point for Zn(2+). The active site involves Glu-184. Residues His-187 and His-193 each contribute to the Zn(2+) site. Ca(2+)-binding residues include Arg-264, Gly-266, Thr-268, Asp-296, Gly-298, Gly-299, Asp-301, Thr-338, Glu-340, Gly-345, Gly-347, Asp-349, Asn-354, Ala-356, Asn-358, Gly-362, Gly-363, Ala-364, Gly-365, Asp-367, Gly-371, Ala-372, Gly-373, Gly-374, Asp-376, Gly-380, Gly-381, Ala-382, Gly-383, Asp-385, Asp-394, Asp-401, Asp-411, Asp-453, Ser-455, and Asp-461. Hemolysin-type calcium-binding repeat units follow at residues 343 to 360, 361 to 378, and 379 to 391; these read FGGAGNDLIIGNNAANVI, KGGAGNDLIYGAGGADQL, and WGGAGNDTFVFGA.

This sequence belongs to the peptidase M10B family. It depends on Ca(2+) as a cofactor. Requires Zn(2+) as cofactor.

The protein localises to the secreted. With respect to regulation, is completely inhibited by the metal cation chelators 1,10-phenanthroline and EDTA, but PMSF, pepstatin A and E-64 have no effect on activity. In terms of biological role, peptidase able to cleave azocasein and the milk substrates beta-casein and Na-caseinate. Can withstand UHT processing of milk, and is able to spoil UHT milk over the storage period. This chain is Metallopeptidase AprA, found in Pseudomonas marginalis (Pseudomonas panacis).